We begin with the raw amino-acid sequence, 993 residues long: Muscular LMNA-interacting protein (993 aa).

Residues 1–51 (MLSEQGLLSDCGNNYFQMTSCILSGSIQTTPQVSAGGSEAKPLIFTFVPTV) are interaction with LMNA. The disordered stretch occupies residues 71–90 (PEESSDKSPETVNRSKSNDY). Over residues 80–90 (ETVNRSKSNDY) the composition is skewed to polar residues. Serine 146 carries the phosphoserine modification. 9 disordered regions span residues 152–171 (AASR…AAVR), 186–225 (VRPK…TSEQ), 231–250 (PAFS…PVNL), 300–322 (PHST…KPGL), 334–358 (SHVL…SLKS), 443–481 (SPAS…QGEL), 500–582 (TPLS…IHTY), 677–711 (SALH…TPSL), and 811–864 (LSMH…SQLT). Positions 161–837 (PPGGIGTAAV…GSDTVKTPTT (677 aa)) are required for interaction with ISL1. Over residues 212–225 (KHGQLTSSPTTSEQ) the composition is skewed to polar residues. The segment covering 300–315 (PHSTQLSGSNLPSSTA) has biased composition (polar residues). A compositionally biased stretch (low complexity) spans 343–358 (PRTSSSPPSSSASLKS). Polar residues predominate over residues 500–532 (TPLSQAPSLSPTKQASSSLASMNVERTPSPTLK). Residues 533–563 (SNTMLSLLQTSTSSSVGLPPVPPSSSLSSLK) show a composition bias toward low complexity. Positions 564-574 (SKQDGDLRGPE) are enriched in basic and acidic residues. Polar residues predominate over residues 695–711 (SESTTPNHRSPVSTPSL). Positions 811–822 (LSMHSSDSPSRS) are enriched in low complexity. The residue at position 818 (serine 818) is a Phosphoserine. Polar residues predominate over residues 849–864 (ANLSSPSSTVSESQLT).

Directly interacts with LMNA. Interacts with ISL1 (via N-terminal domain); the interaction represses ISL1 transactivator activity. Interactions of ISL1 with MLIP1 and GCN5/KAT2A may be mutually exclusive. In terms of tissue distribution, predominantly expressed in the heart and skeletal muscle. Also detected in liver. Expressed in skeletal muscle.

Its subcellular location is the nucleus. It is found in the nucleus envelope. The protein localises to the PML body. The protein resides in the cytoplasm. It localises to the cytosol. Its subcellular location is the cell membrane. It is found in the sarcolemma. Its function is as follows. Required for myoblast differentiation into myotubes, possibly acting as a transcriptional regulator of the myogenic program. Required for cardiac adaptation to stress through integrated regulation of the AKT/mTOR pathways and FOXO1. Regulates cardiac homeostasis and plays a role in the protection against cardiac hypertrophy. Binds chromatin. May act as a transcriptional cofactor for ISL1, repressing its transcriptional activity. May also repress MYOCD transcriptional activity. This chain is Muscular LMNA-interacting protein, found in Homo sapiens (Human).